The following is a 1343-amino-acid chain: Xanthine dehydrogenase (1343 aa).

One can recognise a 2Fe-2S ferredoxin-type domain in the interval 8-95; sequence SELVFFVNGK…GCAVTTVEGI (88 aa). Residues C47, C52, C55, C77, C117, C120, C152, and C154 each contribute to the [2Fe-2S] cluster site. The FAD-binding PCMH-type domain occupies 235 to 424; that stretch reads FSSERVTWYR…LGIHFQKTTP (190 aa). FAD-binding positions include 263–270, F343, 353–357, D366, L414, and K432; these read LVVGNTEV and CLGGN. Mo-molybdopterin is bound by residues Q780 and F811. 2 residues coordinate substrate: E815 and R893. R925 is a binding site for Mo-molybdopterin. Residue F927 coordinates substrate. A1092 contributes to the Mo-molybdopterin binding site. E1275 acts as the Proton acceptor in catalysis.

It belongs to the xanthine dehydrogenase family. As to quaternary structure, homodimer. Requires FAD as cofactor. The cofactor is Mo-molybdopterin. It depends on [2Fe-2S] cluster as a cofactor.

The protein resides in the peroxisome. The enzyme catalyses xanthine + NAD(+) + H2O = urate + NADH + H(+). The catalysed reaction is hypoxanthine + NAD(+) + H2O = xanthine + NADH + H(+). Key enzyme in purine degradation. Catalyzes the oxidation of hypoxanthine to xanthine. Catalyzes the oxidation of xanthine to uric acid. This Drosophila pseudoobscura pseudoobscura (Fruit fly) protein is Xanthine dehydrogenase (ry).